A 199-amino-acid chain; its full sequence is MPNYKLLYFNMRGRAEIIRYIFAYLDIKYEDHRIEQADWPKIKPTLPFGKIPVLEVEGLTIHQSLAIARYLTKNTDLAGKTALEQCQADAVVDTLDDFMSLFPWAEKDQDLKERMFNELLTHQAPRLLKDLDTYLGDKEWFIGNYVTWADFYWDICSTTLLVLKPGLLDIYPKLVSLRNKVQAIPAISAWILKRPQTKL.

In terms of domain architecture, GST N-terminal spans 2-79 (PNYKLLYFNM…YLTKNTDLAG (78 aa)). Residues tyrosine 8, arginine 14, tryptophan 39, 49–51 (GKI), and 63–64 (QS) each bind glutathione. Positions 81 to 199 (TALEQCQADA…WILKRPQTKL (119 aa)) constitute a GST C-terminal domain.

It belongs to the GST superfamily. Sigma family. As to quaternary structure, homodimer. Glutathione serves as cofactor. Expressed in skin and oviduct.

It is found in the cytoplasm. It catalyses the reaction prostaglandin H2 = prostaglandin D2. The catalysed reaction is RX + glutathione = an S-substituted glutathione + a halide anion + H(+). The enzyme catalyses 2-glyceryl-prostaglandin H2 = 2-glyceryl-prostaglandin D2. In terms of biological role, bifunctional enzyme which catalyzes both the conversion of PGH2 to PGD2, a prostaglandin involved in smooth muscle contraction/relaxation and a potent inhibitor of platelet aggregation, and the conjugation of glutathione with a wide range of aryl halides and organic isothiocyanates. Also exhibits low glutathione-peroxidase activity. In Mus musculus (Mouse), this protein is Hematopoietic prostaglandin D synthase.